A 241-amino-acid chain; its full sequence is 3-deoxy-manno-octulosonate cytidylyltransferase (241 aa).

The protein belongs to the KdsB family.

The protein resides in the cytoplasm. It carries out the reaction 3-deoxy-alpha-D-manno-oct-2-ulosonate + CTP = CMP-3-deoxy-beta-D-manno-octulosonate + diphosphate. It participates in nucleotide-sugar biosynthesis; CMP-3-deoxy-D-manno-octulosonate biosynthesis; CMP-3-deoxy-D-manno-octulosonate from 3-deoxy-D-manno-octulosonate and CTP: step 1/1. Its pathway is bacterial outer membrane biogenesis; lipopolysaccharide biosynthesis. In terms of biological role, activates KDO (a required 8-carbon sugar) for incorporation into bacterial lipopolysaccharide in Gram-negative bacteria. The chain is 3-deoxy-manno-octulosonate cytidylyltransferase from Rickettsia typhi (strain ATCC VR-144 / Wilmington).